Reading from the N-terminus, the 364-residue chain is Threonine-phosphate decarboxylase (364 aa).

Residues 8–9 (HG), N32, and N157 each bind O-phospho-L-threonine. K216 is modified (N6-(pyridoxal phosphate)lysine). O-phospho-L-threonine contacts are provided by R323 and R337.

Belongs to the class-II pyridoxal-phosphate-dependent aminotransferase family. As to quaternary structure, homodimer. It depends on pyridoxal 5'-phosphate as a cofactor.

It carries out the reaction O-phospho-L-threonine + H(+) = (R)-1-aminopropan-2-yl phosphate + CO2. It participates in cofactor biosynthesis; adenosylcobalamin biosynthesis. Functionally, decarboxylates L-threonine-O-3-phosphate to yield (R)-1-amino-2-propanol O-2-phosphate, the precursor for the linkage between the nucleotide loop and the corrin ring in cobalamin. The polypeptide is Threonine-phosphate decarboxylase (cobD) (Salmonella typhimurium (strain LT2 / SGSC1412 / ATCC 700720)).